A 197-amino-acid polypeptide reads, in one-letter code: TM2 domain-containing protein 1 (197 aa).

Residues 1-32 (MAFRWRSLMRFRSTTRLLLLFTFCLTVIHSLG) form the signal peptide. Residues 33–105 (NDVDSCDKLH…GFNKTIPCRN (73 aa)) are Extracellular-facing. Residues N77, N84, N98, and N105 are each glycosylated (N-linked (GlcNAc...) asparagine). A helical transmembrane segment spans residues 106-126 (VSGYSYKVAVALSLFLGWIGA). Residues 108 to 155 (GYSYKVAVALSLFLGWIGADRFYLGYPALGLLKFCTVGFCGIGSLVDF) enclose the TM2 domain. The Cytoplasmic portion of the chain corresponds to 127–143 (DRFYLGYPALGLLKFCT). A helical transmembrane segment spans residues 144–164 (VGFCGIGSLVDFMLISMQIVG). The Extracellular portion of the chain corresponds to 165–197 (PSDGSDYIVDYYGARLTRLSITNETYRRMQPSP). N187 carries N-linked (GlcNAc...) asparagine glycosylation.

Belongs to the TM2 family.

It localises to the membrane. In Danio rerio (Zebrafish), this protein is TM2 domain-containing protein 1 (tm2d1).